The primary structure comprises 395 residues: Protein BUR2 (395 aa).

Disordered stretches follow at residues 1 to 31 and 372 to 395; these read MSATSSSGDVKKFQAVPKPTSNASPPPASSG and AKQESMKRKAKDPIRTPDAKKPKI. Serine 24 carries the phosphoserine modification.

In terms of assembly, belongs to the BUR kinase complex composed of SGV1/BUR1 and BUR2. Interacts with SGV1.

It localises to the nucleus. In terms of biological role, component of the BUR kinase complex involved in transcription regulation. This complex phosphorylates 'Ser-120' of the UBC2/RAD6 ubiquitin-conjugating enzyme (E2), leading to monoubiquitination of histone H2B, the localization of the PAF1 complex to the chromatin, and the silencing of telomeric-associated genes. Also required for histone H3 'Lys-4' trimethylation. May phosphorylate the 'Ser-5' of the RBP1 carboxy-terminal domain (CTD) repeats. Necessary for the recovery from pheromone-induced growth arrest in the cell cycle G1 phase. Also required for vegetative growth itself. The kinase activity of the complex requires the presence of BUR2. Overexpression of BUR2 interferes with mitotic chromosome segregation. The chain is Protein BUR2 (BUR2) from Saccharomyces cerevisiae (strain ATCC 204508 / S288c) (Baker's yeast).